The sequence spans 261 residues: WW domain-binding protein 2 (261 aa).

The GRAM domain maps to 1-84 (MALNKNHSEG…YLMKDCEIKQ (84 aa)). Y192 bears the Phosphotyrosine; by YES and SRC mark. The PPxY motif 1 signature appears at 196 to 200 (PPPPY). Residues 196–209 (PPPPYPGPMEPPVS) show a composition bias toward pro residues. The tract at residues 196–261 (PPPPYPGPME…YYPPEDKKTQ (66 aa)) is disordered. The segment covering 218–230 (AAEAKAAEAAASA) has biased composition (low complexity). Residue Y231 is modified to Phosphotyrosine; by YES and SRC. Over residues 245 to 254 (SQPPPPPYYP) the composition is skewed to pro residues. A PPxY motif 2 motif is present at residues 248–252 (PPPPY).

As to quaternary structure, binds to the WW domain of YAP1, WWP1 and WWP2. Interacts with NEDD4. Interacts with ESR1 and UBE3A. Post-translationally, phosphorylated in repsonse to EGF as well as estrogen and progesterone hormones. Tyr-192 and Tyr-231 are phosphorylated by YES and SRC inducing nuclear translocation. Ubiquitous.

The protein resides in the cytoplasm. It localises to the nucleus. Acts as a transcriptional coactivator of estrogen and progesterone receptors (ESR1 and PGR) upon hormone activation. In presence of estrogen, binds to ESR1-responsive promoters. Synergizes with YAP1 to enhance PGR activity. Modulates expression of post-synaptic scaffolding proteins via regulation of ESR1, ESR2 and PGR. The protein is WW domain-binding protein 2 of Homo sapiens (Human).